A 280-amino-acid polypeptide reads, in one-letter code: UPF0276 protein NGO_1946 (280 aa).

It belongs to the UPF0276 family.

This chain is UPF0276 protein NGO_1946, found in Neisseria gonorrhoeae (strain ATCC 700825 / FA 1090).